The following is a 299-amino-acid chain: Transcription factor MYB17 (299 aa).

HTH myb-type domains lie at lysine 9–leucine 61 and arginine 62–leucine 116. DNA-binding regions (H-T-H motif) lie at residues tryptophan 37 to leucine 61 and tryptophan 89 to leucine 112.

Interacts with LFY. In terms of tissue distribution, expressed in the shoot apex, young flower buds, developing carpels and siliques. Expressed in floral meristem, initiating floral primordia and developing flowers.

The protein localises to the nucleus. Its function is as follows. Transcription factor that may play a role in flower development by repressing ANT. Regulates the transition of meristem identity from vegetative growth to flowering. Acts downstream of LFY and upstream of AP1. Directly activates AP1 to promote floral fate. Together with LFY and AP1 may constitute a regulatory network that contributes to an abrupt and robust meristem identity transition. This Arabidopsis thaliana (Mouse-ear cress) protein is Transcription factor MYB17.